The primary structure comprises 294 residues: Ankyrin repeat and SOCS box protein 9 (294 aa).

The residue at position 1 (Met-1) is an N-acetylmethionine. 6 ANK repeats span residues 35–64 (SDWS…AVNI), 68–97 (DHVS…QVNG), 101–130 (DWHT…SVQP), 133–162 (DLAS…NIDH), 166–195 (HLGT…DVNQ), and 198–227 (GQDS…DTQA). A Phosphoserine modification is found at Ser-51. In terms of domain architecture, SOCS box spans 240-294 (PPESPLAQLFLEREGPPSLMQLCRLRIRKCFGIQQHHKITKLVLPEDLKQFLLHL).

This sequence belongs to the ankyrin SOCS box (ASB) family. In terms of assembly, substrate-recognition component of the ECS(ASB9) complex, composed of ASB9, CUL5, ELOB, ELOC and RNF7/RBX2. In terms of tissue distribution, predominantly expressed in testis, kidney, and liver.

Its subcellular location is the mitochondrion. The protein operates within protein modification; protein ubiquitination. In terms of biological role, substrate-recognition component of a cullin-5-RING E3 ubiquitin-protein ligase complex (ECS complex, also named CRL5 complex), which mediates the ubiquitination and subsequent proteasomal degradation of target proteins. The ECS(ASB9) complex catalyzes ubiquitination of creatine kinases CKB and CKMT1A. Does not interact with the Elongin BC complex, likely to be a negative regulator of isoform 1. This is Ankyrin repeat and SOCS box protein 9 from Homo sapiens (Human).